We begin with the raw amino-acid sequence, 387 residues long: Protein ERD1 homolog 2 (387 aa).

The next 8 membrane-spanning stretches (helical) occupy residues 20 to 40 (IGLL…LIYI), 92 to 112 (AGYC…ILFL), 126 to 146 (PIYP…PFPW), 177 to 197 (FIVS…YIFG), 217 to 237 (GTFF…LQCL), 252 to 272 (LLSA…AIIH), 285 to 305 (GYLF…TFLW), and 326 to 346 (FPMF…VTWS). The EXS domain maps to 212–387 (DLKCDGTFFV…LFFHLDAISS (176 aa)).

This sequence belongs to the ERD1 family.

It is found in the membrane. This Schizosaccharomyces pombe (strain 972 / ATCC 24843) (Fission yeast) protein is Protein ERD1 homolog 2.